The chain runs to 119 residues: C-X-C motif chemokine 17 (119 aa).

The first 21 residues, 1–21, serve as a signal peptide directing secretion; the sequence is MKVLISSLLLLLPLMLMSMVS. 2 disulfides stabilise this stretch: cysteine 75–cysteine 103 and cysteine 77–cysteine 110. Residues 81–100 form a disordered region; sequence KGNVKKTRHQRHHRKPNKHS. The span at 82 to 100 shows a compositional bias: basic residues; it reads GNVKKTRHQRHHRKPNKHS.

This sequence belongs to the intercrine alpha (chemokine CxC) family. Post-translationally, likely to undergo an endoproteolytic process to form a four-cysteine-containing mature peptide with a canonical CXC chemokine scaffold after secretion. As to expression, detected in trachea, stomach, lung and skeletal muscle. Detected in intestine and in normal and asthmatic lung (at protein level). Breast tumors showed 3- to 24-fold up-regulation.

The protein resides in the secreted. In terms of biological role, chemokine that acts as a chemoattractant for monocytes, macrophages and dendritic cells. Plays a role in angiogenesis and possibly in the development of tumors. Acts as an anti-inflammatory in the stomach. May play a role in the innate defense against infections. Activates the C-X-C chemokine receptor GPR35 to induce a rapid and transient rise in the level of intracellular calcium ions. Seems to exhibit much higher chemoattractant potency on monocytes and macrophages than 6-Cys CXCL17. In Homo sapiens (Human), this protein is C-X-C motif chemokine 17 (CXCL17).